The following is a 296-amino-acid chain: Tyrosine recombinase XerC (296 aa).

One can recognise a Core-binding (CB) domain in the interval 1–84 (MNKIQESFLY…TLRSFYEFWM (84 aa)). The Tyr recombinase domain maps to 105–286 (YLPHFFYEEE…SNQQLRKVYL (182 aa)). Active-site residues include Arg145, Lys169, His238, Arg241, and His264. Catalysis depends on Tyr273, which acts as the O-(3'-phospho-DNA)-tyrosine intermediate.

This sequence belongs to the 'phage' integrase family. XerC subfamily. Forms a cyclic heterotetrameric complex composed of two molecules of XerC and two molecules of XerD.

The protein resides in the cytoplasm. In terms of biological role, site-specific tyrosine recombinase, which acts by catalyzing the cutting and rejoining of the recombining DNA molecules. The XerC-XerD complex is essential to convert dimers of the bacterial chromosome into monomers to permit their segregation at cell division. It also contributes to the segregational stability of plasmids. The protein is Tyrosine recombinase XerC of Staphylococcus carnosus (strain TM300).